Here is a 151-residue protein sequence, read N- to C-terminus: Glycine and methionine-rich protein (151 aa).

An N-terminal signal peptide occupies residues M1 to A19.

In terms of tissue distribution, component of the acid-insoluble and acid-soluble organic matrix of calcified layers of the shell (at protein level).

The protein resides in the secreted. This chain is Glycine and methionine-rich protein, found in Lottia gigantea (Giant owl limpet).